We begin with the raw amino-acid sequence, 169 residues long: S-ribosylhomocysteine lyase (169 aa).

Fe cation is bound by residues His-54, His-58, and Cys-129.

This sequence belongs to the LuxS family. As to quaternary structure, homodimer. Requires Fe cation as cofactor.

It carries out the reaction S-(5-deoxy-D-ribos-5-yl)-L-homocysteine = (S)-4,5-dihydroxypentane-2,3-dione + L-homocysteine. Its function is as follows. Involved in the synthesis of autoinducer 2 (AI-2) which is secreted by bacteria and is used to communicate both the cell density and the metabolic potential of the environment. The regulation of gene expression in response to changes in cell density is called quorum sensing. Catalyzes the transformation of S-ribosylhomocysteine (RHC) to homocysteine (HC) and 4,5-dihydroxy-2,3-pentadione (DPD). The chain is S-ribosylhomocysteine lyase from Glaesserella parasuis serovar 5 (strain SH0165) (Haemophilus parasuis).